A 434-amino-acid chain; its full sequence is Histidinol dehydrogenase (434 aa).

Substrate contacts are provided by Ser-242, Gln-264, and His-267. Residues Gln-264 and His-267 each coordinate Zn(2+). Residues Glu-332 and His-333 each act as proton acceptor in the active site. His-333, Asp-366, Glu-420, and His-425 together coordinate substrate. Position 366 (Asp-366) interacts with Zn(2+). Zn(2+) is bound at residue His-425.

This sequence belongs to the histidinol dehydrogenase family. Zn(2+) is required as a cofactor.

It carries out the reaction L-histidinol + 2 NAD(+) + H2O = L-histidine + 2 NADH + 3 H(+). It functions in the pathway amino-acid biosynthesis; L-histidine biosynthesis; L-histidine from 5-phospho-alpha-D-ribose 1-diphosphate: step 9/9. Its function is as follows. Catalyzes the sequential NAD-dependent oxidations of L-histidinol to L-histidinaldehyde and then to L-histidine. This chain is Histidinol dehydrogenase, found in Oleidesulfovibrio alaskensis (strain ATCC BAA-1058 / DSM 17464 / G20) (Desulfovibrio alaskensis).